The sequence spans 556 residues: Cytochrome P450 4g1 (556 aa).

Residues glutamate 356 and cysteine 497 each contribute to the heme site.

This sequence belongs to the cytochrome P450 family. Heme is required as a cofactor.

Its subcellular location is the endoplasmic reticulum membrane. It localises to the microsome membrane. Functionally, may be involved in the metabolism of insect hormones and in the breakdown of synthetic insecticides. The sequence is that of Cytochrome P450 4g1 (Cyp4g1) from Drosophila melanogaster (Fruit fly).